We begin with the raw amino-acid sequence, 279 residues long: Calcium-binding protein 4 (279 aa).

Basic and acidic residues predominate over residues Met1 to Pro12. Residues Met1–Arg114 are disordered. A Phosphoserine modification is found at Ser42. Over residues Gly55–Met65 the composition is skewed to polar residues. 4 consecutive EF-hand domains span residues Glu133–Met168, Gly187–Glu204, Leu210–Glu245, and Leu247–His279. Asp146, Asp148, Asp150, Tyr152, and Asp157 together coordinate Ca(2+). Positions 223, 225, 227, 229, 234, 260, 262, 264, 266, and 271 each coordinate Ca(2+).

In terms of assembly, interacts with CACNA1F and CACNA1D (via IQ domain) in a calcium independent manner. Interacts (via N-terminus) with UNC119. Phosphorylated. Phosphorylation levels change with the light conditions and regulate the activity. In terms of tissue distribution, expressed in the retina.

Its subcellular location is the cytoplasm. The protein resides in the presynapse. Its function is as follows. May play a role in normal synaptic function, probably through regulation of Ca(2+) influx and neurotransmitter release in photoreceptor synaptic terminals and in auditory transmission. Modulator of CACNA1F, shifting the activation range to more hyperpolarized voltages. This Bos taurus (Bovine) protein is Calcium-binding protein 4 (CABP4).